Here is a 106-residue protein sequence, read N- to C-terminus: Somatoliberin (106 aa).

A signal peptide spans 1–19 (MLLWVFFLVTLTLSSGSHG). The propeptide occupies 20 to 30 (SLPSQPLRIPR). Leu-74 is subject to Leucine amide. Residues 77-106 (QVDGVWTDQQQMALESTLVSLLQERRNSQG) constitute a propeptide that is removed on maturation.

The protein belongs to the glucagon family.

The protein localises to the secreted. In terms of biological role, GRF is released by the hypothalamus and acts on the adenohypophyse to stimulate the secretion of growth hormone. This chain is Somatoliberin (GHRH), found in Bos taurus (Bovine).